An 80-amino-acid polypeptide reads, in one-letter code: Consomatin Mrc1 (80 aa).

The first 22 residues, 1–22, serve as a signal peptide directing secretion; that stretch reads MQTAYWVMVMMMVWITAPLSEG. Residues 23–57 constitute a propeptide that is removed on maturation; the sequence is GKLNDVIRGLVPDDVTPQLILRSLISRRPSDSVVR. Cys63 and Cys68 are joined by a disulfide. Trp65 is modified (D-tryptophan). 4-hydroxyproline is present on residues Pro69, Pro70, Pro71, and Pro72. Positions 74–80 are excised as a propeptide; the sequence is RRPNGKG.

It belongs to the conotoxin C superfamily. Consomatin family. Expressed by the venom duct.

The protein localises to the secreted. In terms of biological role, moderately activates human somatostatin receptors (SSTR) with a preferential activation of SSTR1 and SSTR4. In vivo, does not cause behavioral changes in mice within a few minutes of intracranial injection, but causes a progressive loss of movement thereafter. Four to five hours after injection, mice recover, even with the highest dose tested. Shows antinociception and antihyperalgesia activities in two mouse models of acute pain, most probably by acting outside the central nervous system. This Conus mercator (Trader cone) protein is Consomatin Mrc1.